A 311-amino-acid chain; its full sequence is Methenyltetrahydromethanopterin cyclohydrolase (311 aa).

Belongs to the MCH family.

It is found in the cytoplasm. The catalysed reaction is 5,10-methenyl-5,6,7,8-tetrahydromethanopterin + H2O = N(5)-formyl-5,6,7,8-tetrahydromethanopterin + H(+). Catalyzes the hydrolysis of methenyl-H(4)MPT(+) to 5-formyl-H(4)MPT. This is Methenyltetrahydromethanopterin cyclohydrolase from Halobacterium salinarum (strain ATCC 29341 / DSM 671 / R1).